The sequence spans 37 residues: Photosystem I reaction center subunit VIII (37 aa).

A helical membrane pass occupies residues 7–27 (LPSIFVPLVGLVFPAIAMASL).

It belongs to the PsaI family.

It localises to the plastid. Its subcellular location is the chloroplast thylakoid membrane. Functionally, may help in the organization of the PsaL subunit. The chain is Photosystem I reaction center subunit VIII from Populus alba (White poplar).